The primary structure comprises 322 residues: HPr kinase/phosphorylase (322 aa).

Residues His-146 and Lys-167 contribute to the active site. 161–168 contacts ATP; the sequence is GDSGLGKS. Position 168 (Ser-168) interacts with Mg(2+). Catalysis depends on Asp-185, which acts as the Proton acceptor; for phosphorylation activity. Proton donor; for dephosphorylation activity. An important for the catalytic mechanism of both phosphorylation and dephosphorylation region spans residues 209-218; that stretch reads LEVRGLGLLD. Glu-210 is a Mg(2+) binding site. Arg-250 is an active-site residue. Residues 271–276 form an important for the catalytic mechanism of dephosphorylation region; that stretch reads QVAAGR.

This sequence belongs to the HPrK/P family. As to quaternary structure, homohexamer. Mg(2+) serves as cofactor.

It catalyses the reaction [HPr protein]-L-serine + ATP = [HPr protein]-O-phospho-L-serine + ADP + H(+). It carries out the reaction [HPr protein]-O-phospho-L-serine + phosphate + H(+) = [HPr protein]-L-serine + diphosphate. In terms of biological role, catalyzes the ATP- as well as the pyrophosphate-dependent phosphorylation of a specific serine residue in HPr, a phosphocarrier protein of the phosphoenolpyruvate-dependent sugar phosphotransferase system (PTS). HprK/P also catalyzes the pyrophosphate-producing, inorganic phosphate-dependent dephosphorylation (phosphorolysis) of seryl-phosphorylated HPr (P-Ser-HPr). This Burkholderia ambifaria (strain ATCC BAA-244 / DSM 16087 / CCUG 44356 / LMG 19182 / AMMD) (Burkholderia cepacia (strain AMMD)) protein is HPr kinase/phosphorylase.